The following is a 157-amino-acid chain: Protein UXT (157 aa).

Belongs to the UXT family. In terms of assembly, homohexamer. Component of the PAQosome complex which is responsible for the biogenesis of several protein complexes and which consists of R2TP complex members RUVBL1, RUVBL2, RPAP3 and PIH1D1, URI complex members PFDN2, PFDN6, PDRG1, UXT and URI1 as well as ASDURF, POLR2E and DNAAF10/WDR92. Interacts with LRPPRC. Interacts with androgen receptor AR (via N-terminus). Interacts with estrogen receptor ESR1; the interaction relocalizes ESR1 to the cytoplasm. In the nucleus, interacts specifically with RELA (via RHD domain) and forms a dynamic complex with NF-kappa-B and is recruited to the NF-kappa-B enhanceosome upon stimulation. Interacts with MECOM. Interacts with URI1.

The protein localises to the cytoplasm. It localises to the nucleus. The protein resides in the cytoskeleton. Its subcellular location is the microtubule organizing center. It is found in the centrosome. The protein localises to the spindle pole. In terms of biological role, involved in gene transcription regulation. Acts in concert with the corepressor URI1 to regulate androgen receptor AR-mediated transcription. Together with URI1, associates with chromatin to the NKX3-1 promoter region. Negatively regulates the transcriptional activity of the estrogen receptor ESR1 by inducing its translocation into the cytoplasm. May act as nuclear chaperone that facilitates the formation of the NF-kappa-B enhanceosome and thus positively regulates NF-kappa-B transcription activity. Potential component of mitochondrial-associated LRPPRC, a multidomain organizer that potentially integrates mitochondria and the microtubular cytoskeleton with chromosome remodeling. Increasing concentrations of UXT contributes to progressive aggregation of mitochondria and cell death potentially through its association with LRPPRC. Suppresses cell transformation and it might mediate this function by interaction and inhibition of the biological activity of cell proliferation and survival stimulatory factors like MECOM. The sequence is that of Protein UXT (Uxt) from Rattus norvegicus (Rat).